The primary structure comprises 374 residues: Flavonoid O-methyltransferase-like protein Os11g0303600 (374 aa).

Positions 242, 262, 263, and 276 each coordinate S-adenosyl-L-homocysteine. The active-site Proton acceptor is histidine 280.

It belongs to the class I-like SAM-binding methyltransferase superfamily. Cation-independent O-methyltransferase family. COMT subfamily.

The chain is Flavonoid O-methyltransferase-like protein Os11g0303600 from Oryza sativa subsp. japonica (Rice).